The sequence spans 273 residues: Cytosolic sulfotransferase 4 (273 aa).

Residue 74–79 coordinates 3'-phosphoadenylyl sulfate; that stretch reads KCGTTW. Histidine 121 acts as the Proton acceptor in catalysis. 3'-phosphoadenylyl sulfate contacts are provided by residues arginine 143 and 239–241; that span reads RKG.

This sequence belongs to the sulfotransferase 1 family.

Its subcellular location is the cytoplasm. In terms of biological role, sulfotransferase that utilizes 3'-phospho-5'-adenylyl sulfate (PAPS) as sulfonate donor. The sequence is that of Cytosolic sulfotransferase 4 (SOT4) from Arabidopsis thaliana (Mouse-ear cress).